Reading from the N-terminus, the 424-residue chain is Probable serine/threonine-protein kinase PBL6 (424 aa).

Positions 1–26 (MGCFGRTPKSNKRSDTKTTKNNDFTP) are disordered. Residue Gly2 is the site of N-myristoyl glycine attachment. Cys3 is lipidated: S-palmitoyl cysteine. The residue at position 87 (Thr87) is a Phosphothreonine. In terms of domain architecture, Protein kinase spans 98-377 (FKSDCFLGEG…VVMALDHLAS (280 aa)). Residues 104-112 (LGEGGFGKV) and Lys127 each bind ATP. Position 172 is a phosphotyrosine (Tyr172). Catalysis depends on Asp225, which acts as the Proton acceptor. Phosphoserine occurs at positions 229 and 259. Phosphothreonine occurs at positions 260 and 265. Tyr273 bears the Phosphotyrosine mark.

It belongs to the protein kinase superfamily. Ser/Thr protein kinase family.

The protein resides in the cell membrane. The catalysed reaction is L-seryl-[protein] + ATP = O-phospho-L-seryl-[protein] + ADP + H(+). It catalyses the reaction L-threonyl-[protein] + ATP = O-phospho-L-threonyl-[protein] + ADP + H(+). May be involved in plant defense signaling. This is Probable serine/threonine-protein kinase PBL6 from Arabidopsis thaliana (Mouse-ear cress).